We begin with the raw amino-acid sequence, 183 residues long: Nucleoplasmin-like protein NO29 (183 aa).

Acidic residues predominate over residues 126-166; the sequence is SDDEDLSGSEEEMEDEEEEEDDDDDDDDDDDDDDDDDEEEI. A disordered region spans residues 126–183; the sequence is SDDEDLSGSEEEMEDEEEEEDDDDDDDDDDDDDDDDDEEEITPIKPAKKPLKTLSRTF.

This sequence belongs to the nucleoplasmin family.

The protein resides in the nucleus. It is found in the nucleolus. The protein is Nucleoplasmin-like protein NO29 of Xenopus laevis (African clawed frog).